The chain runs to 328 residues: 5,10-methylenetetrahydromethanopterin reductase (328 aa).

The protein belongs to the mer family.

It is found in the cytoplasm. The catalysed reaction is 5-methyl-5,6,7,8-tetrahydromethanopterin + oxidized coenzyme F420-(gamma-L-Glu)(n) + H(+) = 5,10-methylenetetrahydromethanopterin + reduced coenzyme F420-(gamma-L-Glu)(n). It participates in one-carbon metabolism; methanogenesis from CO(2); methyl-coenzyme M from 5,10-methylene-5,6,7,8-tetrahydromethanopterin: step 1/2. Catalyzes the reversible reduction of methylene-H(4)MPT to methyl-H(4)MPT. The protein is 5,10-methylenetetrahydromethanopterin reductase of Methanosarcina barkeri (strain Fusaro / DSM 804).